We begin with the raw amino-acid sequence, 503 residues long: Probable cytosol aminopeptidase (503 aa).

Mn(2+) contacts are provided by Lys-270 and Asp-275. Residue Lys-282 is part of the active site. Positions 293, 352, and 354 each coordinate Mn(2+). Arg-356 is an active-site residue.

The protein belongs to the peptidase M17 family. Mn(2+) is required as a cofactor.

The protein resides in the cytoplasm. The catalysed reaction is Release of an N-terminal amino acid, Xaa-|-Yaa-, in which Xaa is preferably Leu, but may be other amino acids including Pro although not Arg or Lys, and Yaa may be Pro. Amino acid amides and methyl esters are also readily hydrolyzed, but rates on arylamides are exceedingly low.. The enzyme catalyses Release of an N-terminal amino acid, preferentially leucine, but not glutamic or aspartic acids.. Its function is as follows. Presumably involved in the processing and regular turnover of intracellular proteins. Catalyzes the removal of unsubstituted N-terminal amino acids from various peptides. The sequence is that of Probable cytosol aminopeptidase from Yersinia enterocolitica serotype O:8 / biotype 1B (strain NCTC 13174 / 8081).